The chain runs to 874 residues: Bifunctional uridylyltransferase/uridylyl-removing enzyme (874 aa).

Residues 1–336 (MIDTSTITNP…DNGKTVETIQ (336 aa)) are uridylyltransferase. The tract at residues 337–695 (LSDDFQIRGH…LSKKATRGGT (359 aa)) is uridylyl-removing. In terms of domain architecture, HD spans 455 to 577 (VDEHSVRLIK…VRDEERLDYL (123 aa)). ACT domains lie at 696-779 (EVFV…RAPR) and 802-874 (TMEL…TPQD).

The protein belongs to the GlnD family. Mg(2+) is required as a cofactor.

The enzyme catalyses [protein-PII]-L-tyrosine + UTP = [protein-PII]-uridylyl-L-tyrosine + diphosphate. The catalysed reaction is [protein-PII]-uridylyl-L-tyrosine + H2O = [protein-PII]-L-tyrosine + UMP + H(+). Its activity is regulated as follows. Uridylyltransferase (UTase) activity is inhibited by glutamine, while glutamine activates uridylyl-removing (UR) activity. Its function is as follows. Modifies, by uridylylation and deuridylylation, the PII regulatory proteins (GlnB and homologs), in response to the nitrogen status of the cell that GlnD senses through the glutamine level. Under low glutamine levels, catalyzes the conversion of the PII proteins and UTP to PII-UMP and PPi, while under higher glutamine levels, GlnD hydrolyzes PII-UMP to PII and UMP (deuridylylation). Thus, controls uridylylation state and activity of the PII proteins, and plays an important role in the regulation of nitrogen assimilation and metabolism. The protein is Bifunctional uridylyltransferase/uridylyl-removing enzyme of Photobacterium profundum (strain SS9).